Consider the following 343-residue polypeptide: N-acetyl-gamma-glutamyl-phosphate reductase (343 aa).

Residue cysteine 149 is part of the active site.

Belongs to the NAGSA dehydrogenase family. Type 1 subfamily.

Its subcellular location is the cytoplasm. It catalyses the reaction N-acetyl-L-glutamate 5-semialdehyde + phosphate + NADP(+) = N-acetyl-L-glutamyl 5-phosphate + NADPH + H(+). Its pathway is amino-acid biosynthesis; L-arginine biosynthesis; N(2)-acetyl-L-ornithine from L-glutamate: step 3/4. Its function is as follows. Catalyzes the NADPH-dependent reduction of N-acetyl-5-glutamyl phosphate to yield N-acetyl-L-glutamate 5-semialdehyde. This chain is N-acetyl-gamma-glutamyl-phosphate reductase, found in Methanococcus maripaludis (strain C5 / ATCC BAA-1333).